The chain runs to 406 residues: Tryptophan synthase beta chain (406 aa).

K99 is modified (N6-(pyridoxal phosphate)lysine).

The protein belongs to the TrpB family. Tetramer of two alpha and two beta chains. It depends on pyridoxal 5'-phosphate as a cofactor.

The catalysed reaction is (1S,2R)-1-C-(indol-3-yl)glycerol 3-phosphate + L-serine = D-glyceraldehyde 3-phosphate + L-tryptophan + H2O. It participates in amino-acid biosynthesis; L-tryptophan biosynthesis; L-tryptophan from chorismate: step 5/5. Functionally, the beta subunit is responsible for the synthesis of L-tryptophan from indole and L-serine. This is Tryptophan synthase beta chain from Rhizobium meliloti (strain 1021) (Ensifer meliloti).